Here is a 147-residue protein sequence, read N- to C-terminus: Deoxyuridine 5'-triphosphate nucleotidohydrolase (147 aa).

Substrate is bound by residues 67–69 (RSG), Asn-80, and 84–86 (LID).

This sequence belongs to the dUTPase family. Requires Mg(2+) as cofactor.

It catalyses the reaction dUTP + H2O = dUMP + diphosphate + H(+). Its pathway is pyrimidine metabolism; dUMP biosynthesis; dUMP from dCTP (dUTP route): step 2/2. Functionally, this enzyme is involved in nucleotide metabolism: it produces dUMP, the immediate precursor of thymidine nucleotides and it decreases the intracellular concentration of dUTP so that uracil cannot be incorporated into DNA. The chain is Deoxyuridine 5'-triphosphate nucleotidohydrolase from Dictyoglomus turgidum (strain DSM 6724 / Z-1310).